We begin with the raw amino-acid sequence, 340 residues long: Flavonoid 7-O-methyltransferase 1 (340 aa).

Asp-207 contributes to the S-adenosyl-L-methionine binding site. Residue His-245 is the Proton acceptor of the active site.

Belongs to the class I-like SAM-binding methyltransferase superfamily. Cation-independent O-methyltransferase family. Homodimer. In terms of tissue distribution, expressed in leaves.

The catalysed reaction is (2S)-naringenin + S-adenosyl-L-methionine = (2S)-sakuranetin + S-adenosyl-L-homocysteine + H(+). The enzyme catalyses scutellarein + S-adenosyl-L-methionine = scutellarein 7-methyl ether + S-adenosyl-L-homocysteine. It catalyses the reaction apigenin + S-adenosyl-L-methionine = genkwanin + S-adenosyl-L-homocysteine + H(+). It carries out the reaction luteolin + S-adenosyl-L-methionine = luteolin 7-methyl ether + S-adenosyl-L-homocysteine + H(+). The catalysed reaction is chrysoeriol + S-adenosyl-L-methionine = velutin + S-adenosyl-L-homocysteine. The enzyme catalyses diosmetin + S-adenosyl-L-methionine = luteolin 4',7-dimethyl ether + S-adenosyl-L-homocysteine. It catalyses the reaction acacetin + S-adenosyl-L-methionine = apigenin 4',7-dimethyl ether + S-adenosyl-L-homocysteine. It carries out the reaction scutellarein 4'-methyl ether + S-adenosyl-L-methionine = ladanein + S-adenosyl-L-homocysteine. It functions in the pathway flavonoid metabolism. Its function is as follows. Flavonoid 7-O-methyltransferase involved in the biosynthesis of polymethoxylated flavonoids natural products such as nevadensin and salvigenin, aroma compounds which contribute to the flavor of sweet basil, and exhibit pharmacological activities such as anti-allergic, anti-oxidant, antibacterial, anti-proliferative, and anti-inflammatory effects. Catalyzes S-adenosylmethionine-dependent regioselective 7-O-methylation of flavonoids; active on various hydroxylated flavonoid substrates, including apigenin (API) and luteolin (LUT), and, with a lower efficiency, scutellarein (SCU), naringenin (NAR), chrysoeriol (CHRYS), diosmetin (DIOS), acacetin (ACA) and scutellarein-7-methyl ether (SCU7Me). This chain is Flavonoid 7-O-methyltransferase 1, found in Ocimum basilicum (Sweet basil).